A 134-amino-acid chain; its full sequence is Nif-regulating protein A (134 aa).

The C4-type; atypical zinc-finger motif lies at C3–H36.

As to quaternary structure, interacts with the general archaeal transcription factors TBPs.

Functionally, involved in nitrogen regulation. Enhances the transcription of the nitrogen fixation (nif) operon under nitrogen-limited conditions. Acts by binding to the nifH promoter region. This chain is Nif-regulating protein A, found in Methanosarcina mazei (strain ATCC BAA-159 / DSM 3647 / Goe1 / Go1 / JCM 11833 / OCM 88) (Methanosarcina frisia).